The chain runs to 353 residues: MEAKKVTEEEEETWRREIVTSVMRLVSTRLPQTDLISLLLVSPWLYRTLISYPSIWLTINLREMTNAGDRLLAALSLPRYRQVKHINLEFAQGVVDSHLKLVKTECPDALLSLEWLNLNVCQKISDNGIEAITSICPKLKVFSIYWNVRVTDAGIRNLVKNCRHITDLNLSGCKSLTDKSMQLVAESYPDLESLNITRCVKITDDGLLQVLQKCFSLQTLNLYALSGFTDKAYMKISLLADLRFLDICGAQNISDEGIGHIAKCNKLESLNLTWCVRITDAGVNTIANSCTSLEFLSLFGIVGVTDRCLETLSQTCSTTLTTLDVNGCTGIKRRSREELLQMFPRLTCFKVHS.

Residues 8 to 56 (EEEEETWRREIVTSVMRLVSTRLPQTDLISLLLVSPWLYRTLISYPSIW) enclose the F-box; degenerate domain.

This Arabidopsis thaliana (Mouse-ear cress) protein is F-box protein At3g58530.